The primary structure comprises 347 residues: NADH-ubiquinone oxidoreductase chain 2 (347 aa).

The next 10 membrane-spanning stretches (helical) occupy residues 13–33 (VILG…WIGF), 59–79 (YFFT…LNLM), 96–116 (MIMT…FWVP), 122–142 (IPLS…LTVL), 149–169 (INLT…GWGG), 178–198 (IMAY…IYNP), 200–220 (MTLL…MLFM), 240–260 (IVTI…LTGF), 276–296 (IILP…YMRL), and 325–345 (LLTP…MIII).

This sequence belongs to the complex I subunit 2 family. Core subunit of respiratory chain NADH dehydrogenase (Complex I) which is composed of 45 different subunits. Interacts with TMEM242.

It localises to the mitochondrion inner membrane. It carries out the reaction a ubiquinone + NADH + 5 H(+)(in) = a ubiquinol + NAD(+) + 4 H(+)(out). In terms of biological role, core subunit of the mitochondrial membrane respiratory chain NADH dehydrogenase (Complex I) which catalyzes electron transfer from NADH through the respiratory chain, using ubiquinone as an electron acceptor. Essential for the catalytic activity and assembly of complex I. The sequence is that of NADH-ubiquinone oxidoreductase chain 2 from Molossus ater (Black mastiff bat).